The following is an 813-amino-acid chain: MLDTEPVDMIPLITPEEEAEMDKEEFPSVLPILPVRNIVLFPGVVLPITVGRQKSIRLVKKFYKGDRTIGVVAQENQKSEEPSFQDIFKVGTVAKILRMFVLPDGNTTIIIQGKRRFKIEEQVQDEPFMQAKVSMLKDIHPDMSKKEVKALLQSVKESATKILKMNPEIPQDAQIAINNIESENFLTHFLSSNINAELKDKQKLLEFDDAVERATWLLQLMDKDIQMLEIKREIHTKVHTDIDQQQRDYFLRQQIKVLQDELGDFSSEQEFERLKEKALTKKWSDKVRAHFDKEMSKLQRVNPMAPDYPVTFNYLELLVDLPWGENSTDNFDLVRAKEILDEDHFGLTKVKQRILEYLAVLKLKNNMKAPILCLYGPPGVGKTSLGKSIAKALDRKYIRMSLGGVHDESEIRGHRKTYIGAMPGKIIQGIKRSETSNPVFILDEIDKISKDFRGDPSSALLEVLDPEQNSSFMDNFLEVEYDLSKVLFIATSNALDTIQPALRDRMEIIEINGYTLEEKIQIAKKYLIPKQKEEHGLKAKDISFTDAAIVKIIEDYTRESGVRNLERKIGAVVRNIAVAIAMETAYTKKIQPAQVREILGSEDFEKDTYQQDDLAGIVTGLAWTPYGGEILTIESIISKGKGKLTLSGQLGDVMKESASAALSLLRANVDAIGIDHRVFDHFDLHVHVPAGATPKDGPSAGIALYTSLASTFTQRKIKPALAMTGEITLRGKVLPVGGIKEKILAAKRAGIKEIILSKKNKKDIEEIHPPDIADLKFHFVETADEVLAIALLKQKIKKPFNLEVPEEPKKKDK.

A Lon N-terminal domain is found at 30–225; the sequence is LPILPVRNIV…WLLQLMDKDI (196 aa). 376 to 383 provides a ligand contact to ATP; that stretch reads GPPGVGKT. A Lon proteolytic domain is found at 612-793; it reads DDLAGIVTGL…DEVLAIALLK (182 aa). Active-site residues include serine 699 and lysine 742.

The protein belongs to the peptidase S16 family. As to quaternary structure, homohexamer. Organized in a ring with a central cavity.

It localises to the cytoplasm. The catalysed reaction is Hydrolysis of proteins in presence of ATP.. Functionally, ATP-dependent serine protease that mediates the selective degradation of mutant and abnormal proteins as well as certain short-lived regulatory proteins. Required for cellular homeostasis and for survival from DNA damage and developmental changes induced by stress. Degrades polypeptides processively to yield small peptide fragments that are 5 to 10 amino acids long. Binds to DNA in a double-stranded, site-specific manner. The polypeptide is Lon protease (Cytophaga hutchinsonii (strain ATCC 33406 / DSM 1761 / CIP 103989 / NBRC 15051 / NCIMB 9469 / D465)).